The sequence spans 535 residues: Light-independent protochlorophyllide reductase subunit B (535 aa).

Asp-36 lines the [4Fe-4S] cluster pocket. Asp-292 serves as the catalytic Proton donor. Substrate is bound at residue 428–429; the sequence is GL. The interval 447-483 is disordered; sequence SDDAAKAEPDQPVSNAHGHTESKTVSQGEPIASDEGG.

This sequence belongs to the ChlB/BchB/BchZ family. In terms of assembly, protochlorophyllide reductase is composed of three subunits; BchL, BchN and BchB. Forms a heterotetramer of two BchB and two BchN subunits. Requires [4Fe-4S] cluster as cofactor.

It catalyses the reaction chlorophyllide a + oxidized 2[4Fe-4S]-[ferredoxin] + 2 ADP + 2 phosphate = protochlorophyllide a + reduced 2[4Fe-4S]-[ferredoxin] + 2 ATP + 2 H2O. It participates in porphyrin-containing compound metabolism; bacteriochlorophyll biosynthesis (light-independent). Component of the dark-operative protochlorophyllide reductase (DPOR) that uses Mg-ATP and reduced ferredoxin to reduce ring D of protochlorophyllide (Pchlide) to form chlorophyllide a (Chlide). This reaction is light-independent. The NB-protein (BchN-BchB) is the catalytic component of the complex. This is Light-independent protochlorophyllide reductase subunit B from Chlorobium phaeobacteroides (strain DSM 266 / SMG 266 / 2430).